The following is a 769-amino-acid chain: Wall-associated receptor kinase-like 10 (769 aa).

A signal peptide spans 1 to 24 (MSSNCSCSLLSLFSLLLIIDLTVA). Residues 25–358 (SSCPKTCGGI…YTCEYTNHRP (334 aa)) are Extracellular-facing. Residues asparagine 58, asparagine 114, asparagine 134, asparagine 182, asparagine 187, asparagine 237, asparagine 262, and asparagine 296 are each glycosylated (N-linked (GlcNAc...) asparagine). An atypical EGF-like region spans residues 291–351 (CLCDYNSTTT…CVNLLGGYTC (61 aa)). Disulfide bonds link cysteine 293–cysteine 305, cysteine 327–cysteine 342, and cysteine 337–cysteine 351. The chain crosses the membrane as a helical span at residues 359-379 (LVIGLSTSFSTLVFIGGIYWL). The Cytoplasmic segment spans residues 380 to 769 (YKFIRRQRRL…RSDVEPLFPR (390 aa)). Positions 433 to 718 (FSLTRILGEG…SYSEDMQPYE (286 aa)) constitute a Protein kinase domain. ATP contacts are provided by residues 439–447 (LGEGGQGTV) and lysine 461. Tyrosine 506 carries the post-translational modification Phosphotyrosine. Aspartate 559 functions as the Proton acceptor in the catalytic mechanism. A phosphothreonine mark is found at threonine 593 and threonine 598. The residue at position 606 (tyrosine 606) is a Phosphotyrosine.

It belongs to the protein kinase superfamily. Ser/Thr protein kinase family.

The protein localises to the membrane. It catalyses the reaction L-seryl-[protein] + ATP = O-phospho-L-seryl-[protein] + ADP + H(+). It carries out the reaction L-threonyl-[protein] + ATP = O-phospho-L-threonyl-[protein] + ADP + H(+). Serine/threonine-protein kinase that may function as a signaling receptor of extracellular matrix component. This is Wall-associated receptor kinase-like 10 (WAKL10) from Arabidopsis thaliana (Mouse-ear cress).